A 460-amino-acid chain; its full sequence is Cysteine--tRNA ligase (460 aa).

Cys28 contributes to the Zn(2+) binding site. A 'HIGH' region motif is present at residues 30-40 (MTVYDYCHLGH). Residues Cys209, His234, and Glu238 each coordinate Zn(2+). Residues 266–270 (KMSKS) carry the 'KMSKS' region motif. Residue Lys269 coordinates ATP.

It belongs to the class-I aminoacyl-tRNA synthetase family. Monomer. It depends on Zn(2+) as a cofactor.

It is found in the cytoplasm. The enzyme catalyses tRNA(Cys) + L-cysteine + ATP = L-cysteinyl-tRNA(Cys) + AMP + diphosphate. The protein is Cysteine--tRNA ligase of Pseudomonas savastanoi pv. phaseolicola (strain 1448A / Race 6) (Pseudomonas syringae pv. phaseolicola (strain 1448A / Race 6)).